Reading from the N-terminus, the 184-residue chain is Shikimate kinase (184 aa).

Position 17–22 (17–22 (SVGKTS)) interacts with ATP. Threonine 21 serves as a coordination point for Mg(2+). 2 residues coordinate substrate: aspartate 39 and glycine 85.

Belongs to the shikimate kinase family. As to quaternary structure, monomer. Mg(2+) serves as cofactor.

It is found in the cytoplasm. The catalysed reaction is shikimate + ATP = 3-phosphoshikimate + ADP + H(+). Its pathway is metabolic intermediate biosynthesis; chorismate biosynthesis; chorismate from D-erythrose 4-phosphate and phosphoenolpyruvate: step 5/7. Catalyzes the specific phosphorylation of the 3-hydroxyl group of shikimic acid using ATP as a cosubstrate. The sequence is that of Shikimate kinase from Chlamydia muridarum (strain MoPn / Nigg).